A 387-amino-acid polypeptide reads, in one-letter code: MSSGKILPRRQAVPVLYTRGTHYEVGFDMGRTFGSMIKNFLILSKPLNETYLPLYQSPKGRQIYNETLGSVKDSFPQYVRELEGVADGAEVEFHKLFLLHLDEILPQALKHQPRSKNQPTGCSTIIVNQKNCRLLGHTEDALTETLNHYYFVVAHIISDKPQGKYNVKEEHFMSLCYAGHLPGYTMSHNHHGLVFSINTISAELLRSGKTPRHFITRALLATSNVDDAFRVLKDAGVGAADACSINFTFLADPRQMCYNVEMAPSPDRKNESHLNIKEVPLGEHNYHVNQFDRIRQDQANDLMISSSISRMQTFGAYNPPMSEQDVRHMLGDVSGGVYCVWRENNSCDEVVKTIAVGIFDLSARTISLYSDNPSETEPHCRLPLLYK.

Belongs to the peptidase C45 family. As to quaternary structure, the unprocessed protein forms homodimers. May form heterodimers composed of a 15 kDa alpha subunit and a 30 kDa beta subunit. Post-translationally, the protein is synthesized as a 43 kDa precursor which is then self-processed into a 15 kDa alpha subunit and a 30 kDa beta subunit. Processing appears to be necessary for beta-alanyl-dopamine/carcinine hydrolase activity. The beta subunit carries the beta-alanyl-dopamine/carcinine hydrolase activity. As to expression, expressed in body, head, optic lobes and retina (at protein level). Expressed in photoreceptor cells R1-R6 in the lamina and in photoreceptor cells R7 and R8 in the medulla (at protein level).

It is found in the cell projection. The protein localises to the axon. It localises to the cytoplasm. The enzyme catalyses carcinine + H2O = histamine + beta-alanine. It catalyses the reaction beta-alanyl-dopamine + H2O = dopamine + beta-alanine. Functionally, in the cuticle, catalyzes the hydrolysis of beta-alanyl-dopamine releasing dopamine and beta-alanine; dopamine is a metabolite involved in the pigmentation and sclerotization of the insect cuticle. In the photoreceptor cells, catalyzes the hydrolysis of carcinine releasing histamine and beta-alanine contributing to the recycling of the neurotransmitter histamine in the optical nerve system. Also, regulates the cuticular hydrocarbon composition in females. The polypeptide is Beta-alanyl-dopamine/carcinine hydrolase (Drosophila melanogaster (Fruit fly)).